The chain runs to 188 residues: Elongation factor P (188 aa).

Lysine 34 is modified (N6-(3,6-diaminohexanoyl)-5-hydroxylysine).

This sequence belongs to the elongation factor P family. In terms of processing, may be beta-lysylated on the epsilon-amino group of Lys-34 by the combined action of EpmA and EpmB, and then hydroxylated on the C5 position of the same residue by EpmC (if this protein is present). Lysylation is critical for the stimulatory effect of EF-P on peptide-bond formation. The lysylation moiety may extend toward the peptidyltransferase center and stabilize the terminal 3-CCA end of the tRNA. Hydroxylation of the C5 position on Lys-34 may allow additional potential stabilizing hydrogen-bond interactions with the P-tRNA.

The protein localises to the cytoplasm. Its pathway is protein biosynthesis; polypeptide chain elongation. Functionally, involved in peptide bond synthesis. Alleviates ribosome stalling that occurs when 3 or more consecutive Pro residues or the sequence PPG is present in a protein, possibly by augmenting the peptidyl transferase activity of the ribosome. Modification of Lys-34 is required for alleviation. The sequence is that of Elongation factor P from Histophilus somni (strain 129Pt) (Haemophilus somnus).